We begin with the raw amino-acid sequence, 753 residues long: Cytoplasmic polyadenylation element-binding protein 3 (753 aa).

The disordered stretch occupies residues 111–286 (VGESTPSSAG…NGSWHGELPP (176 aa)). 2 stretches are compositionally biased toward basic and acidic residues: residues 131–142 (KPTEKISVDEPP) and 175–188 (FGKEEQKPEPEVVK). A compositionally biased stretch (low complexity) spans 227–239 (SPAKISSNSSSSS). Over residues 265 to 279 (SRQGLSNRDNLSNGS) the composition is skewed to polar residues. Positions 298 to 320 (IFVGGVPWDITEAALKDSFGEFG) constitute an RRM domain. The tract at residues 567 to 589 (KAYAGPHRRPHLTSNSLSKSHGC) is disordered. A compositionally biased stretch (polar residues) spans 578 to 589 (LTSNSLSKSHGC).

Its function is as follows. Cytoplasmic polyadenylation element binding protein that binds to and regulates the translation of specific mRNAs. This Caenorhabditis briggsae protein is Cytoplasmic polyadenylation element-binding protein 3 (cpb-3).